Consider the following 227-residue polypeptide: MKHFIGNDWDHVLAPVFESGEYHKLHVFLKKEYQTRQIYPDMYHIFTAFKLTPFKDTKVVILGQDPYHNPSQANGMSFSVMPGTPLPPSLRNIYKELYDDVGAQPVNHGYLKRWADQGVLLLNAVLTVPYGQANGHQGKGWEMVTDAAIKALSERGQVVFILWGRFAQNKIPLIDQDKNVIIKSAHPSPFSANRGFFGSRPFSRCNAALKEFGRAPVDWQLPPNPEA.

Asp-65 functions as the Proton acceptor in the catalytic mechanism.

This sequence belongs to the uracil-DNA glycosylase (UDG) superfamily. UNG family.

The protein localises to the cytoplasm. It carries out the reaction Hydrolyzes single-stranded DNA or mismatched double-stranded DNA and polynucleotides, releasing free uracil.. Excises uracil residues from the DNA which can arise as a result of misincorporation of dUMP residues by DNA polymerase or due to deamination of cytosine. The sequence is that of Uracil-DNA glycosylase from Lactobacillus delbrueckii subsp. bulgaricus (strain ATCC 11842 / DSM 20081 / BCRC 10696 / JCM 1002 / NBRC 13953 / NCIMB 11778 / NCTC 12712 / WDCM 00102 / Lb 14).